Reading from the N-terminus, the 231-residue chain is Large ribosomal subunit protein uL1 (231 aa).

Belongs to the universal ribosomal protein uL1 family. In terms of assembly, part of the 50S ribosomal subunit.

Functionally, binds directly to 23S rRNA. The L1 stalk is quite mobile in the ribosome, and is involved in E site tRNA release. Its function is as follows. Protein L1 is also a translational repressor protein, it controls the translation of the L11 operon by binding to its mRNA. In Acinetobacter baumannii (strain AB0057), this protein is Large ribosomal subunit protein uL1.